The chain runs to 331 residues: Flagellar P-ring protein (331 aa).

The N-terminal stretch at Met1–Ile22 is a signal peptide.

It belongs to the FlgI family. In terms of assembly, the basal body constitutes a major portion of the flagellar organelle and consists of four rings (L,P,S, and M) mounted on a central rod.

It is found in the periplasm. The protein resides in the bacterial flagellum basal body. Its function is as follows. Assembles around the rod to form the L-ring and probably protects the motor/basal body from shearing forces during rotation. This is Flagellar P-ring protein from Pseudothermotoga lettingae (strain ATCC BAA-301 / DSM 14385 / NBRC 107922 / TMO) (Thermotoga lettingae).